Here is a 175-residue protein sequence, read N- to C-terminus: Transcriptional repressor NrdR (175 aa).

Residues 3–32 (CPYCSHPDSKVIDSRDVDDGVRRRRECVVC) fold into a zinc finger. The ATP-cone domain occupies 47-137 (LFVVKKDQRR…VYREFTDITQ (91 aa)).

It belongs to the NrdR family. It depends on Zn(2+) as a cofactor.

Negatively regulates transcription of bacterial ribonucleotide reductase nrd genes and operons by binding to NrdR-boxes. The protein is Transcriptional repressor NrdR of Dehalococcoides mccartyi (strain ATCC BAA-2100 / JCM 16839 / KCTC 5957 / BAV1).